The primary structure comprises 1043 residues: Isoleucine--tRNA ligase (1043 aa).

Pro-46 and His-57 together coordinate L-isoleucyl-5'-AMP. The 'HIGH' region signature appears at 47–57 (PTANGLPHVGH). Positions 181 and 184 each coordinate Zn(2+). Positions 319 and 328 each coordinate L-valine. Zn(2+) is bound by residues Cys-389, Cys-392, Cys-461, Cys-464, Cys-502, and Cys-504. Residues Glu-550, Gly-551, Asp-553, Gln-554, and His-581 each coordinate L-isoleucyl-5'-AMP. A 'KMSKS' region motif is present at residues 591–595 (KMSKS). Residue Lys-594 coordinates ATP.

The protein belongs to the class-I aminoacyl-tRNA synthetase family. IleS type 2 subfamily. In terms of assembly, monomer. Zn(2+) is required as a cofactor.

The protein localises to the cytoplasm. The catalysed reaction is tRNA(Ile) + L-isoleucine + ATP = L-isoleucyl-tRNA(Ile) + AMP + diphosphate. Its function is as follows. Catalyzes the attachment of isoleucine to tRNA(Ile). As IleRS can inadvertently accommodate and process structurally similar amino acids such as valine, to avoid such errors it has two additional distinct tRNA(Ile)-dependent editing activities. One activity is designated as 'pretransfer' editing and involves the hydrolysis of activated Val-AMP. The other activity is designated 'posttransfer' editing and involves deacylation of mischarged Val-tRNA(Ile). This Thermus thermophilus (strain ATCC 27634 / DSM 579 / HB8) protein is Isoleucine--tRNA ligase (ileS).